A 113-amino-acid chain; its full sequence is uncharacterized protein (113 aa).

Disordered regions lie at residues 1-22 and 90-113; these read MGEH…PLAQ and DGRH…SDDL. A compositionally biased stretch (basic and acidic residues) spans 90 to 99; sequence DGRHTTESSF. Over residues 100–113 the composition is skewed to low complexity; it reads EHSSPSRSPQSDDL.

This is an uncharacterized protein from Mycobacterium tuberculosis (strain ATCC 25618 / H37Rv).